The primary structure comprises 781 residues: Dynamin-related protein dnm1 (781 aa).

The Dynamin-type G domain maps to 23-328 (FLDLPSIVVV…LVSHIRERLP (306 aa)). The tract at residues 33 to 40 (GSQSCGKS) is G1 motif. 33–40 (GSQSCGKS) contacts GTP. The segment at 59–61 (VTR) is G2 motif. Residues 76–103 (KNNHDEESTSDNNSEETSAAGETGSLEG) form a disordered region. The G3 motif stretch occupies residues 170–173 (DLPG). GTP is bound by residues 170–174 (DLPGL) and 239–242 (TKLD). Residues 239 to 242 (TKLD) are G4 motif. Residues 269–272 (VNRS) are G5 motif. One can recognise a GED domain in the interval 694-781 (VDLIKELITS…QANKIISTVF (88 aa)).

This sequence belongs to the TRAFAC class dynamin-like GTPase superfamily. Dynamin/Fzo/YdjA family.

The protein localises to the cytoplasm. The protein resides in the mitochondrion outer membrane. The enzyme catalyses GTP + H2O = GDP + phosphate + H(+). Microtubule-associated force-producing protein that mediates mitochondrial fission during interphasic growth and at cell division. Fission of mitochondria occurs in many cell types and constitutes an important step in mitochondria morphology, which is balanced between fusion and fission. With vps1, acts redundantly in peroxisome biogenesis, which is under cell cycle control. This is Dynamin-related protein dnm1 (dnm1) from Schizosaccharomyces pombe (strain 972 / ATCC 24843) (Fission yeast).